A 172-amino-acid polypeptide reads, in one-letter code: R-phycocyanin beta chain (172 aa).

(2R,3E)-phycoerythrobilin is bound by residues N35 and D39. (2R,3E)-phycocyanobilin-binding positions include N72, C82, and 84–85 (RD). N72 is modified (N4-methylasparagine). Residues 149–151 (PAG) and C153 each bind (2R,3E)-phycoerythrobilin.

This sequence belongs to the phycobiliprotein family. In terms of assembly, heterododecamer of 6 alpha and 6 beta chains. The basic functional unit of phycobiliproteins is a ring-shaped hexamer formed from two back-to-back trimers contacting via the alpha chain subunits. The trimers are composed of alpha/beta subunit heterodimers arranged around a three-fold axis of symmetry. The phycoerythrins also contain a gamma subunit which is located in the center of the hexamer. Contains one covalently linked phycocyanobilin chromophore and one covalently linked phycoerythrobilin chromophore.

The protein resides in the plastid. The protein localises to the chloroplast thylakoid membrane. In terms of biological role, light-harvesting photosynthetic tetrapyrrole chromophore-protein from the phycobiliprotein complex (phycobilisome, PBS). Phycocyanin is the major phycobiliprotein in the PBS rod. The chain is R-phycocyanin beta chain (rpcB) from Polysiphonia urceolata (Red alga).